The following is a 149-amino-acid chain: Calmodulin (149 aa).

Ala-2 carries the N-acetylalanine modification. 4 consecutive EF-hand domains span residues 8–43, 44–79, 81–116, and 117–149; these read EQIS…LGQN, PTEA…KMRD, DSEE…LGEK, and LTDN…MLSK. Positions 21, 23, 25, 27, 32, 57, 59, 61, 63, 68, 94, 96, 98, 100, 105, 130, 132, 134, 136, and 141 each coordinate Ca(2+).

Belongs to the calmodulin family.

Calmodulin mediates the control of a large number of enzymes, ion channels and other proteins by Ca(2+). Among the enzymes to be stimulated by the calmodulin-Ca(2+) complex are a number of protein kinases and phosphatases. This chain is Calmodulin (CMD1), found in Pleurotus ostreatus (Oyster mushroom).